We begin with the raw amino-acid sequence, 185 residues long: Ribosome-recycling factor (185 aa).

It belongs to the RRF family.

The protein resides in the cytoplasm. In terms of biological role, responsible for the release of ribosomes from messenger RNA at the termination of protein biosynthesis. May increase the efficiency of translation by recycling ribosomes from one round of translation to another. This chain is Ribosome-recycling factor, found in Wolbachia sp. subsp. Brugia malayi (strain TRS).